The following is a 589-amino-acid chain: V-type ATP synthase alpha chain (589 aa).

239–246 (GPFGAGKT) lines the ATP pocket.

Belongs to the ATPase alpha/beta chains family.

It catalyses the reaction ATP + H2O + 4 H(+)(in) = ADP + phosphate + 5 H(+)(out). Produces ATP from ADP in the presence of a proton gradient across the membrane. The V-type alpha chain is a catalytic subunit. This Treponema denticola (strain ATCC 35405 / DSM 14222 / CIP 103919 / JCM 8153 / KCTC 15104) protein is V-type ATP synthase alpha chain.